The chain runs to 373 residues: 3-dehydroquinate synthase (373 aa).

NAD(+)-binding positions include 67-72 (EGEETK), 101-105 (GVILD), 125-126 (TT), lysine 138, and lysine 147. Zn(2+) is bound by residues glutamate 180, histidine 240, and histidine 256.

The protein belongs to the sugar phosphate cyclases superfamily. Dehydroquinate synthase family. NAD(+) serves as cofactor. Co(2+) is required as a cofactor. The cofactor is Zn(2+).

It localises to the cytoplasm. It carries out the reaction 7-phospho-2-dehydro-3-deoxy-D-arabino-heptonate = 3-dehydroquinate + phosphate. It participates in metabolic intermediate biosynthesis; chorismate biosynthesis; chorismate from D-erythrose 4-phosphate and phosphoenolpyruvate: step 2/7. Catalyzes the conversion of 3-deoxy-D-arabino-heptulosonate 7-phosphate (DAHP) to dehydroquinate (DHQ). This is 3-dehydroquinate synthase from Chlamydia trachomatis serovar A (strain ATCC VR-571B / DSM 19440 / HAR-13).